The primary structure comprises 467 residues: Glutamate--tRNA ligase (467 aa).

The 'HIGH' region motif lies at P10–G20. 4 residues coordinate Zn(2+): C99, C101, C126, and E128. The 'KMSKS' region signature appears at R237 to R241. K240 provides a ligand contact to ATP.

It belongs to the class-I aminoacyl-tRNA synthetase family. Glutamate--tRNA ligase type 1 subfamily. Monomer. The cofactor is Zn(2+).

The protein resides in the cytoplasm. It carries out the reaction tRNA(Glu) + L-glutamate + ATP = L-glutamyl-tRNA(Glu) + AMP + diphosphate. Functionally, catalyzes the attachment of glutamate to tRNA(Glu) in a two-step reaction: glutamate is first activated by ATP to form Glu-AMP and then transferred to the acceptor end of tRNA(Glu). The chain is Glutamate--tRNA ligase from Geotalea uraniireducens (strain Rf4) (Geobacter uraniireducens).